A 380-amino-acid chain; its full sequence is Erythronate-4-phosphate dehydrogenase (380 aa).

Substrate is bound by residues serine 45 and threonine 66. Residue aspartate 146 coordinates NAD(+). Arginine 207 is an active-site residue. Residue aspartate 232 coordinates NAD(+). Glutamate 237 is an active-site residue. Histidine 254 (proton donor) is an active-site residue. Glycine 257 lines the NAD(+) pocket. Tyrosine 258 lines the substrate pocket.

The protein belongs to the D-isomer specific 2-hydroxyacid dehydrogenase family. PdxB subfamily. As to quaternary structure, homodimer.

It localises to the cytoplasm. The enzyme catalyses 4-phospho-D-erythronate + NAD(+) = (R)-3-hydroxy-2-oxo-4-phosphooxybutanoate + NADH + H(+). It participates in cofactor biosynthesis; pyridoxine 5'-phosphate biosynthesis; pyridoxine 5'-phosphate from D-erythrose 4-phosphate: step 2/5. Functionally, catalyzes the oxidation of erythronate-4-phosphate to 3-hydroxy-2-oxo-4-phosphonooxybutanoate. This Marinomonas sp. (strain MWYL1) protein is Erythronate-4-phosphate dehydrogenase.